A 439-amino-acid chain; its full sequence is C4-dicarboxylate transport protein (439 aa).

The next 9 membrane-spanning stretches (helical) occupy residues 9–29 (SLYAQVIVAIIIGVLLGHFLP), 45–65 (LIKMIIAPVIFCTVVIGIAGM), 77–97 (LALLYFEVMSTVALLVGLIIV), 145–165 (AFAKGDVLQVLLVSVLFGFAL), 185–205 (VLFTIVGFIMRAAPVGAFGAM), 223–243 (LMGAFYLTCLFFIFVVLGIVT), 290–310 (VVGLVIPTGYSFNLDGTAIYL), 332–352 (TLLAVLLLTSKGAAGITGSGF), and 353–373 (IVLAATLSAVGHVPVAGLALI). The disordered stretch occupies residues 417–439 (NESPQAADQPEKILDQTNTKLGA).

The protein belongs to the dicarboxylate/amino acid:cation symporter (DAACS) (TC 2.A.23) family.

The protein resides in the cell inner membrane. Functionally, responsible for the transport of dicarboxylates such as succinate, fumarate, and malate from the periplasm across the membrane. The sequence is that of C4-dicarboxylate transport protein from Janthinobacterium sp. (strain Marseille) (Minibacterium massiliensis).